The following is a 640-amino-acid chain: 1-deoxy-D-xylulose-5-phosphate synthase (640 aa).

Thiamine diphosphate-binding positions include histidine 79 and 120–122; that span reads AHA. Position 151 (aspartate 151) interacts with Mg(2+). Residues 152-153, asparagine 180, tyrosine 287, and glutamate 369 each bind thiamine diphosphate; that span reads GS. Residue asparagine 180 coordinates Mg(2+).

This sequence belongs to the transketolase family. DXPS subfamily. In terms of assembly, homodimer. Mg(2+) serves as cofactor. The cofactor is thiamine diphosphate.

The catalysed reaction is D-glyceraldehyde 3-phosphate + pyruvate + H(+) = 1-deoxy-D-xylulose 5-phosphate + CO2. It participates in metabolic intermediate biosynthesis; 1-deoxy-D-xylulose 5-phosphate biosynthesis; 1-deoxy-D-xylulose 5-phosphate from D-glyceraldehyde 3-phosphate and pyruvate: step 1/1. Functionally, catalyzes the acyloin condensation reaction between C atoms 2 and 3 of pyruvate and glyceraldehyde 3-phosphate to yield 1-deoxy-D-xylulose-5-phosphate (DXP). The chain is 1-deoxy-D-xylulose-5-phosphate synthase from Hyphomonas neptunium (strain ATCC 15444).